A 435-amino-acid chain; its full sequence is 26S proteasome regulatory subunit 7 (435 aa).

Basic and acidic residues predominate over residues M1–N23. The disordered stretch occupies residues M1–F24. G218–T225 is a binding site for ATP.

Belongs to the AAA ATPase family.

The protein localises to the cytoplasm. Its subcellular location is the nucleus. The 26S proteasome is involved in the ATP-dependent degradation of ubiquitinated proteins. The regulatory (or ATPase) complex confers ATP dependency and substrate specificity to the 26S complex. This Caenorhabditis elegans protein is 26S proteasome regulatory subunit 7 (rpt-1).